The primary structure comprises 331 residues: Glycerol-3-phosphate dehydrogenase [NAD(P)+] (331 aa).

NADPH-binding residues include Ser-10, Trp-11, Arg-31, Arg-32, and Lys-105. Residues Lys-105 and Gly-135 each contribute to the sn-glycerol 3-phosphate site. Residue Ala-139 participates in NADPH binding. Positions 190, 243, 253, 254, and 255 each coordinate sn-glycerol 3-phosphate. The active-site Proton acceptor is the Lys-190. Arg-254 contributes to the NADPH binding site. Residues Val-279 and Glu-281 each contribute to the NADPH site.

Belongs to the NAD-dependent glycerol-3-phosphate dehydrogenase family.

It is found in the cytoplasm. It catalyses the reaction sn-glycerol 3-phosphate + NAD(+) = dihydroxyacetone phosphate + NADH + H(+). The enzyme catalyses sn-glycerol 3-phosphate + NADP(+) = dihydroxyacetone phosphate + NADPH + H(+). It participates in membrane lipid metabolism; glycerophospholipid metabolism. Its function is as follows. Catalyzes the reduction of the glycolytic intermediate dihydroxyacetone phosphate (DHAP) to sn-glycerol 3-phosphate (G3P), the key precursor for phospholipid synthesis. The sequence is that of Glycerol-3-phosphate dehydrogenase [NAD(P)+] from Corynebacterium diphtheriae (strain ATCC 700971 / NCTC 13129 / Biotype gravis).